A 610-amino-acid polypeptide reads, in one-letter code: MIKNIFQSRKLSGLCVLSILLVSVTILLLTNDTIDLFPYLSLPYLPRSSLSVIPTSTPISSPTNDSSPPLESPVNQTRVDDHPDDQGLELDWLKDDKQWNVSLKIDWKRCESPDYIPCLDNTKAIKKLKSKRNMEHRERHCPERSPKCLVPLPQHYKVPLPWPQSRDMIWYDNVPHPKLVEYKKDQNWVRKSGPFFVFPGGGTQFKDGVIHYINFIQKTLPILDWGKKVRVVLDVGCGVASFGGTLLDKNVITMSFAPKDEHEAQIQFALERGIPATLAVIGTQKLPFPDNAYDVIHCARCRVHWHGYGGRPLLELNRVLRPGGFFVWSATPVYQHDEGHRNVWKTMESLTTSMCWKVVARTRFTKVGFVIYQKPDSDSCYESRKNKDPPLCIEEETKKNSSWYTPLLTCLPKLPVSPIGKWPSGWPERLTETPVSLFREQRSEESFREDSKLWSGVMSNIYLYSLAINWTRIHNVMDMNAGYGGFAAALINKPLWVMNVIPVEGEDTLSTIFDRGLIGIYHDWCESFNTYPRSYDLLHSSFLFTNLSQRCDLMEVVVEIDRILRPGGYLAVQDTVEMLKKLNPILLSLRWSTNLYRGKFLVGLKSSWRP.

At 1 to 10 the chain is on the cytoplasmic side; it reads MIKNIFQSRK. The chain crosses the membrane as a helical; Signal-anchor for type II membrane protein span at residues 11–31; it reads LSGLCVLSILLVSVTILLLTN. At 32 to 610 the chain is on the lumenal side; that stretch reads DTIDLFPYLS…LVGLKSSWRP (579 aa). Low complexity predominate over residues 56–69; that stretch reads STPISSPTNDSSPP. The segment at 56–81 is disordered; the sequence is STPISSPTNDSSPPLESPVNQTRVDD. Residues asparagine 64, asparagine 75, asparagine 100, asparagine 400, asparagine 469, and asparagine 546 are each glycosylated (N-linked (GlcNAc...) asparagine).

Belongs to the methyltransferase superfamily.

It localises to the endoplasmic reticulum membrane. This is Probable methyltransferase PMT22 from Arabidopsis thaliana (Mouse-ear cress).